A 213-amino-acid chain; its full sequence is Methylthioribulose-1-phosphate dehydratase (213 aa).

Zn(2+)-binding residues include His104 and His106.

This sequence belongs to the aldolase class II family. MtnB subfamily. Zn(2+) is required as a cofactor.

It catalyses the reaction 5-(methylsulfanyl)-D-ribulose 1-phosphate = 5-methylsulfanyl-2,3-dioxopentyl phosphate + H2O. The protein operates within amino-acid biosynthesis; L-methionine biosynthesis via salvage pathway; L-methionine from S-methyl-5-thio-alpha-D-ribose 1-phosphate: step 2/6. Its function is as follows. Catalyzes the dehydration of methylthioribulose-1-phosphate (MTRu-1-P) into 2,3-diketo-5-methylthiopentyl-1-phosphate (DK-MTP-1-P). This chain is Methylthioribulose-1-phosphate dehydratase, found in Stenotrophomonas maltophilia (strain R551-3).